Here is a 648-residue protein sequence, read N- to C-terminus: Threonine--tRNA ligase (648 aa).

The TGS domain maps to 1–61 (MIKITLPDGS…TTDGSLVLYT (61 aa)). Positions 240-539 (DHRKLGKELE…LLEHTAGNFP (300 aa)) are catalytic. The Zn(2+) site is built by cysteine 335, histidine 386, and histidine 516.

This sequence belongs to the class-II aminoacyl-tRNA synthetase family. In terms of assembly, homodimer. Zn(2+) serves as cofactor.

The protein resides in the cytoplasm. It carries out the reaction tRNA(Thr) + L-threonine + ATP = L-threonyl-tRNA(Thr) + AMP + diphosphate + H(+). Its function is as follows. Catalyzes the attachment of threonine to tRNA(Thr) in a two-step reaction: L-threonine is first activated by ATP to form Thr-AMP and then transferred to the acceptor end of tRNA(Thr). Also edits incorrectly charged L-seryl-tRNA(Thr). The chain is Threonine--tRNA ligase from Flavobacterium psychrophilum (strain ATCC 49511 / DSM 21280 / CIP 103535 / JIP02/86).